A 515-amino-acid chain; its full sequence is 2-isopropylmalate synthase (515 aa).

A Pyruvate carboxyltransferase domain is found at 5–267; that stretch reads VIIFDTTLRD…HTNLKHDEIH (263 aa). Mn(2+) is bound by residues Asp14, His202, His204, and Asn238. The tract at residues 392–515 is regulatory domain; the sequence is KLNYLSVQSG…EIKQKKVETV (124 aa).

It belongs to the alpha-IPM synthase/homocitrate synthase family. LeuA type 1 subfamily. In terms of assembly, homodimer. The cofactor is Mn(2+).

The protein resides in the cytoplasm. It carries out the reaction 3-methyl-2-oxobutanoate + acetyl-CoA + H2O = (2S)-2-isopropylmalate + CoA + H(+). It functions in the pathway amino-acid biosynthesis; L-leucine biosynthesis; L-leucine from 3-methyl-2-oxobutanoate: step 1/4. Catalyzes the condensation of the acetyl group of acetyl-CoA with 3-methyl-2-oxobutanoate (2-ketoisovalerate) to form 3-carboxy-3-hydroxy-4-methylpentanoate (2-isopropylmalate). The chain is 2-isopropylmalate synthase from Aliivibrio fischeri (strain MJ11) (Vibrio fischeri).